The sequence spans 488 residues: Altronate oxidoreductase (488 aa).

18–29 (VIQFGEGNFLRA) is a binding site for NAD(+).

Belongs to the mannitol dehydrogenase family. UxaB subfamily.

It catalyses the reaction D-altronate + NAD(+) = keto-D-tagaturonate + NADH + H(+). The protein operates within carbohydrate metabolism; pentose and glucuronate interconversion. The polypeptide is Altronate oxidoreductase (Pectobacterium atrosepticum (strain SCRI 1043 / ATCC BAA-672) (Erwinia carotovora subsp. atroseptica)).